A 388-amino-acid chain; its full sequence is S-adenosylmethionine synthase (388 aa).

H16 lines the ATP pocket. Residue D18 participates in Mg(2+) binding. E44 contacts K(+). Residues E57 and Q100 each contribute to the L-methionine site. The interval 100–110 (QSPEIAQGVDR) is flexible loop. Residues 165-167 (DAK), D240, 246-247 (RK), A263, and K267 each bind ATP. Position 240 (D240) interacts with L-methionine. K271 is a binding site for L-methionine.

Belongs to the AdoMet synthase family. As to quaternary structure, homotetramer; dimer of dimers. Mg(2+) is required as a cofactor. Requires K(+) as cofactor.

It is found in the cytoplasm. The enzyme catalyses L-methionine + ATP + H2O = S-adenosyl-L-methionine + phosphate + diphosphate. The protein operates within amino-acid biosynthesis; S-adenosyl-L-methionine biosynthesis; S-adenosyl-L-methionine from L-methionine: step 1/1. In terms of biological role, catalyzes the formation of S-adenosylmethionine (AdoMet) from methionine and ATP. The overall synthetic reaction is composed of two sequential steps, AdoMet formation and the subsequent tripolyphosphate hydrolysis which occurs prior to release of AdoMet from the enzyme. This Acinetobacter baylyi (strain ATCC 33305 / BD413 / ADP1) protein is S-adenosylmethionine synthase.